The following is a 144-amino-acid chain: Large ribosomal subunit protein uL15 (144 aa).

Positions 1-45 (MNLNTLSPDPGSRPSRRRVGRGIGSGLGKTCGKGHKGQKSRAGGY) are disordered. Positions 21-31 (RGIGSGLGKTC) are enriched in gly residues.

The protein belongs to the universal ribosomal protein uL15 family. In terms of assembly, part of the 50S ribosomal subunit.

In terms of biological role, binds to the 23S rRNA. The sequence is that of Large ribosomal subunit protein uL15 from Legionella pneumophila (strain Corby).